Here is a 176-residue protein sequence, read N- to C-terminus: NAD(P)H-quinone oxidoreductase subunit I, chloroplastic (176 aa).

4Fe-4S ferredoxin-type domains are found at residues Gly55–Glu84 and Leu95–Glu124. 8 residues coordinate [4Fe-4S] cluster: Cys64, Cys67, Cys70, Cys74, Cys104, Cys107, Cys110, and Cys114.

This sequence belongs to the complex I 23 kDa subunit family. In terms of assembly, NDH is composed of at least 16 different subunits, 5 of which are encoded in the nucleus. The cofactor is [4Fe-4S] cluster.

It is found in the plastid. Its subcellular location is the chloroplast thylakoid membrane. It carries out the reaction a plastoquinone + NADH + (n+1) H(+)(in) = a plastoquinol + NAD(+) + n H(+)(out). It catalyses the reaction a plastoquinone + NADPH + (n+1) H(+)(in) = a plastoquinol + NADP(+) + n H(+)(out). Its function is as follows. NDH shuttles electrons from NAD(P)H:plastoquinone, via FMN and iron-sulfur (Fe-S) centers, to quinones in the photosynthetic chain and possibly in a chloroplast respiratory chain. The immediate electron acceptor for the enzyme in this species is believed to be plastoquinone. Couples the redox reaction to proton translocation, and thus conserves the redox energy in a proton gradient. This chain is NAD(P)H-quinone oxidoreductase subunit I, chloroplastic, found in Populus trichocarpa (Western balsam poplar).